The following is an 89-amino-acid chain: UPF0237 protein CE1668 (89 aa).

The region spanning 4–78 is the ACT domain; it reads IMTVTGQDHT…KEQGLVIRIQ (75 aa).

The protein belongs to the UPF0237 family.

The sequence is that of UPF0237 protein CE1668 from Corynebacterium efficiens (strain DSM 44549 / YS-314 / AJ 12310 / JCM 11189 / NBRC 100395).